The primary structure comprises 327 residues: DNA-directed RNA polymerase subunit alpha (327 aa).

The segment at 1–243 (MEKFLKYEIK…EHLNPIVNVN (243 aa)) is alpha N-terminal domain (alpha-NTD). The tract at residues 260–327 (RVRSFAKQIE…VHELGLKLRS (68 aa)) is alpha C-terminal domain (alpha-CTD).

This sequence belongs to the RNA polymerase alpha chain family. In terms of assembly, homodimer. The RNAP catalytic core consists of 2 alpha, 1 beta, 1 beta' and 1 omega subunit. When a sigma factor is associated with the core the holoenzyme is formed, which can initiate transcription.

It catalyses the reaction RNA(n) + a ribonucleoside 5'-triphosphate = RNA(n+1) + diphosphate. In terms of biological role, DNA-dependent RNA polymerase catalyzes the transcription of DNA into RNA using the four ribonucleoside triphosphates as substrates. The protein is DNA-directed RNA polymerase subunit alpha of Mycoplasma pneumoniae (strain ATCC 29342 / M129 / Subtype 1) (Mycoplasmoides pneumoniae).